The chain runs to 177 residues: Protein C2-DOMAIN ABA-RELATED 4 (177 aa).

In terms of domain architecture, C2 spans 4–118; sequence ACPARTSSLM…LRMQLDGLPS (115 aa). Residues arginine 33, aspartate 34, aspartate 39, aspartate 85, histidine 86, aspartate 87, and aspartate 93 each contribute to the Ca(2+) site.

Belongs to the plant CAR protein family. Dimers and oligomers. Binds to PYR/PYL/RCAR abscisic acid intracellular receptors in an ABA-independent manner, both at the plasma membrane and in the nucleus. Interacts directly with PYR1, PYL1, PYL4, PYL6 and PYL8. Binds phospholipids in a Ca(2+)-dependent manner. Interacts with YchF1. It depends on Ca(2+) as a cofactor.

The protein localises to the cell membrane. It localises to the nucleus. Its subcellular location is the cytoplasm. The protein resides in the cytosol. Its function is as follows. Mediates the transient calcium-dependent interaction of PYR/PYL/RCAR abscisic acid (ABA) receptors with the plasma membrane and thus regulates ABA sensitivity. Stimulates the GTPase/ATPase activities of YchF1, and regulates its subcellular localization. Promotes tolerance towards salinity stress by limiting the accumulation of reactive oxygen species (ROS). Promotes resistance to bacterial pathogens (e.g. Xanthomonas oryzae pv. oryzae and P.syringae pv. tomato DC3000). Binds liposomes in the absence of exogenous Ca(2+), but this activity is enhanced in the presence of Ca(2+) and generates membrane curvature. The protein is Protein C2-DOMAIN ABA-RELATED 4 of Arabidopsis thaliana (Mouse-ear cress).